We begin with the raw amino-acid sequence, 229 residues long: Uracil-DNA glycosylase (229 aa).

Asp-64 serves as the catalytic Proton acceptor.

The protein belongs to the uracil-DNA glycosylase (UDG) superfamily. UNG family.

It localises to the cytoplasm. It catalyses the reaction Hydrolyzes single-stranded DNA or mismatched double-stranded DNA and polynucleotides, releasing free uracil.. Excises uracil residues from the DNA which can arise as a result of misincorporation of dUMP residues by DNA polymerase or due to deamination of cytosine. The polypeptide is Uracil-DNA glycosylase (Geobacillus kaustophilus (strain HTA426)).